A 556-amino-acid chain; its full sequence is Delta-1-pyrroline-5-carboxylate dehydrogenase, mitochondrial (556 aa).

Residues 1 to 17 (MLRARSAVSQSWKGFKT) constitute a mitochondrion transit peptide. NAD(+) is bound by residues Lys226 and 279 to 283 (GSVPT). The Proton acceptor role is filled by Glu307. Catalysis depends on Cys341, which acts as the Nucleophile. NAD(+) is bound at residue Glu440. Position 506 (Ser506) interacts with substrate.

This sequence belongs to the aldehyde dehydrogenase family.

Its subcellular location is the mitochondrion matrix. It catalyses the reaction L-glutamate 5-semialdehyde + NAD(+) + H2O = L-glutamate + NADH + 2 H(+). It participates in amino-acid degradation; L-proline degradation into L-glutamate; L-glutamate from L-proline: step 2/2. Its function is as follows. Irreversible conversion of delta-1-pyrroline-5-carboxylate (P5C), derived either from proline or ornithine, to glutamate. This is a necessary step in the pathway interconnecting the urea and tricarboxylic acid cycles. The protein is Delta-1-pyrroline-5-carboxylate dehydrogenase, mitochondrial (aldh4a1) of Danio rerio (Zebrafish).